The primary structure comprises 201 residues: Recombination protein RecR (201 aa).

The C4-type zinc finger occupies 60 to 75; the sequence is CSCCGNVDTIDPCTVC. The region spanning 83-178 is the Toprim domain; it reads SMIIVVEDVS…KTTRLAHGVP (96 aa).

Belongs to the RecR family.

In terms of biological role, may play a role in DNA repair. It seems to be involved in an RecBC-independent recombinational process of DNA repair. It may act with RecF and RecO. The sequence is that of Recombination protein RecR from Allorhizobium ampelinum (strain ATCC BAA-846 / DSM 112012 / S4) (Agrobacterium vitis (strain S4)).